The following is a 658-amino-acid chain: Probable mitochondrial Rho GTPase gemA (658 aa).

The Cytoplasmic segment spans residues 1–633 (MKNNIKVILI…NGSNGSNNSN (633 aa)). The Miro 1 domain occupies 2-175 (KNNIKVILIG…LYASQTSVFF (174 aa)). Residues 11–18 (GDEQVGKS), 57–62 (DTFDDG), and 118–121 (NKLD) each bind GTP. EF-hand domains are found at residues 191–226 (GCERALKRIFKLCDHDNDGSLSEEEINYFQTKCGHE) and 311–346 (MGNEFFKSLFEKYDSDSDGVLSSFDLVSLFSTTPKI). The Ca(2+) site is built by Asp204, Asp206, Asp208, Ser210, Glu215, Asp324, Asp326, Asp328, and Asp335. The Miro 2 domain maps to 420 to 616 (RNIVNCYVFG…YHEMMETIVN (197 aa)). GTP contacts are provided by residues 429 to 436 (GAEAVGKT), 466 to 468 (LLK), and 530 to 533 (TKNN). The interval 532–575 (NNNNNNNNNNNNNNNNNNNNLNNNNNNINNNNNNNNNNTTTTNA) is disordered. Residues 634–656 (ILTYLVIAAGVAGVGLLLSKYLA) form a helical; Anchor for type IV membrane protein membrane-spanning segment. The Mitochondrial intermembrane portion of the chain corresponds to 657–658 (KK).

The protein belongs to the mitochondrial Rho GTPase family.

Its subcellular location is the mitochondrion outer membrane. Functionally, mitochondrial GTPase involved in mitochondrial trafficking. Probably involved in control of anterograde transport of mitochondria and their subcellular distribution. In Dictyostelium discoideum (Social amoeba), this protein is Probable mitochondrial Rho GTPase gemA (gemA).